The following is a 690-amino-acid chain: Protein arginine N-methyltransferase 7 (690 aa).

2 SAM-dependent MTase PRMT-type domains span residues 14-357 (QNSW…YSLW) and 366-690 (TKSV…QKKL).

It belongs to the class I-like SAM-binding methyltransferase superfamily. Protein arginine N-methyltransferase family. PRMT7 subfamily.

Essential arginine methyltransferase that can both catalyze the formation of omega-N monomethylarginine (MMA) and symmetrical dimethylarginine (sDMA). Specifically mediates the symmetrical dimethylation of arginine residues in the small nuclear ribonucleoproteins SmD1 and SmD3. This is Protein arginine N-methyltransferase 7 (Art7) from Drosophila sechellia (Fruit fly).